The primary structure comprises 180 residues: Segregation and condensation protein B (180 aa).

This sequence belongs to the ScpB family. As to quaternary structure, homodimer. Homodimerization may be required to stabilize the binding of ScpA to the Smc head domains. Component of a cohesin-like complex composed of ScpA, ScpB and the Smc homodimer, in which ScpA and ScpB bind to the head domain of Smc. The presence of the three proteins is required for the association of the complex with DNA.

The protein localises to the cytoplasm. Functionally, participates in chromosomal partition during cell division. May act via the formation of a condensin-like complex containing Smc and ScpA that pull DNA away from mid-cell into both cell halves. The chain is Segregation and condensation protein B from Staphylococcus aureus (strain USA300).